A 183-amino-acid polypeptide reads, in one-letter code: Der GTPase-activating protein YihI (183 aa).

A compositionally biased stretch (low complexity) spans 1 to 18; sequence MNQPSKAPRAPRSSAATP. Positions 1 to 114 are disordered; the sequence is MNQPSKAPRA…EEELAKLEND (114 aa). The span at 25–34 shows a compositional bias: basic and acidic residues; it reads RAELDQEARE. A compositionally biased stretch (low complexity) spans 56–65; the sequence is NQKNKAAAQA. A compositionally biased stretch (basic and acidic residues) spans 92-114; sequence PKAEAKPKPRLTPEEELAKLEND.

This sequence belongs to the YihI family. As to quaternary structure, interacts with Der.

A GTPase-activating protein (GAP) that modifies Der/EngA GTPase function. May play a role in ribosome biogenesis. The chain is Der GTPase-activating protein YihI from Serratia proteamaculans (strain 568).